A 1003-amino-acid chain; its full sequence is Cytosolic carboxypeptidase 3 (1003 aa).

Residues 1–23 (MSEDSEKEDYSDRTISDEDESDE) form a disordered region. The Peptidase M14 domain occupies 299-570 (YPYTYTNLQE…HFCDSLLDYC (272 aa)). H364, E367, and H460 together coordinate Zn(2+). E534 acts as the Proton donor/acceptor in catalysis. Disordered regions lie at residues 642 to 662 (KQLK…NIRE) and 911 to 1003 (KSSE…QRDT). Basic and acidic residues predominate over residues 649–662 (ERNSTIERHQNIRE). The span at 922–934 (PKKRRKYSRVKAT) shows a compositional bias: basic residues. Over residues 963–976 (AEGSSQQGTMQTAP) the composition is skewed to polar residues.

This sequence belongs to the peptidase M14 family. Zn(2+) serves as cofactor.

It is found in the cytoplasm. The protein resides in the cytosol. The enzyme catalyses (L-glutamyl)(n+1)-gamma-L-glutamyl-L-glutamyl-[protein] + H2O = (L-glutamyl)(n)-gamma-L-glutamyl-L-glutamyl-[protein] + L-glutamate. In terms of biological role, metallocarboxypeptidase that mediates deglutamylation of tubulin and non-tubulin target proteins. Catalyzes the removal of polyglutamate side chains present on the gamma-carboxyl group of glutamate residues within the C-terminal tail of tubulin protein. Specifically cleaves tubulin long-side-chains, while it is not able to remove the branching point glutamate. Also catalyzes the removal of polyglutamate residues from the carboxy-terminus of non-tubulin proteins such as MYLK. May catalyze the hydrolysis of aspartate from the carboxy-terminus of target proteins. Does not show detyrosinase or deglycylase activities from the carboxy-terminus of target proteins. The protein is Cytosolic carboxypeptidase 3 (AGBL3) of Bos taurus (Bovine).